Here is a 421-residue protein sequence, read N- to C-terminus: Synaptotagmin-15 (421 aa).

At 1–4 (MAEQ) the chain is on the extracellular side. A helical; Signal-anchor for type III membrane protein membrane pass occupies residues 5 to 29 (LALVIGGTIGGLLLLLLIGASCCLW). Residues 30 to 421 (RRFCATLTYE…WHALCRTTEP (392 aa)) lie on the Cytoplasmic side of the membrane. Positions 47-68 (MATTAASSGQRDRPCQPHARTQ) are disordered. 2 C2 domains span residues 147-264 (CLGR…RRVI) and 278-399 (EFGD…EHWD).

Belongs to the synaptotagmin family. In terms of assembly, homodimer.

It is found in the cell membrane. Its function is as follows. May be involved in the trafficking and exocytosis of secretory vesicles in non-neuronal tissues. The protein is Synaptotagmin-15 (SYT15) of Homo sapiens (Human).